Consider the following 270-residue polypeptide: Formamidopyrimidine-DNA glycosylase (270 aa).

Residue P2 is the Schiff-base intermediate with DNA of the active site. Residue E3 is the Proton donor of the active site. K58 functions as the Proton donor; for beta-elimination activity in the catalytic mechanism. Residues H91, R110, and R151 each contribute to the DNA site. The FPG-type zinc-finger motif lies at 236–270 (LVYGRDGLPCPNCGRALKHATIGQRASVWCSHCQR). R260 acts as the Proton donor; for delta-elimination activity in catalysis.

Belongs to the FPG family. Monomer. It depends on Zn(2+) as a cofactor.

The catalysed reaction is Hydrolysis of DNA containing ring-opened 7-methylguanine residues, releasing 2,6-diamino-4-hydroxy-5-(N-methyl)formamidopyrimidine.. The enzyme catalyses 2'-deoxyribonucleotide-(2'-deoxyribose 5'-phosphate)-2'-deoxyribonucleotide-DNA = a 3'-end 2'-deoxyribonucleotide-(2,3-dehydro-2,3-deoxyribose 5'-phosphate)-DNA + a 5'-end 5'-phospho-2'-deoxyribonucleoside-DNA + H(+). Functionally, involved in base excision repair of DNA damaged by oxidation or by mutagenic agents. Acts as a DNA glycosylase that recognizes and removes damaged bases. Has a preference for oxidized purines, such as 7,8-dihydro-8-oxoguanine (8-oxoG). Has AP (apurinic/apyrimidinic) lyase activity and introduces nicks in the DNA strand. Cleaves the DNA backbone by beta-delta elimination to generate a single-strand break at the site of the removed base with both 3'- and 5'-phosphates. The polypeptide is Formamidopyrimidine-DNA glycosylase (Stenotrophomonas maltophilia (strain R551-3)).